A 325-amino-acid polypeptide reads, in one-letter code: 5-dehydro-2-deoxygluconokinase (325 aa).

It belongs to the carbohydrate kinase PfkB family.

The enzyme catalyses 5-dehydro-2-deoxy-D-gluconate + ATP = 6-phospho-5-dehydro-2-deoxy-D-gluconate + ADP + H(+). The protein operates within polyol metabolism; myo-inositol degradation into acetyl-CoA; acetyl-CoA from myo-inositol: step 5/7. Functionally, catalyzes the phosphorylation of 5-dehydro-2-deoxy-D-gluconate (2-deoxy-5-keto-D-gluconate or DKG) to 6-phospho-5-dehydro-2-deoxy-D-gluconate (DKGP). This chain is 5-dehydro-2-deoxygluconokinase (iolC), found in Bacillus subtilis (strain 168).